Reading from the N-terminus, the 213-residue chain is Pyrrolidone-carboxylate peptidase (213 aa).

Residues Glu78, Cys141, and His165 contribute to the active site.

The protein belongs to the peptidase C15 family. As to quaternary structure, homotetramer.

It localises to the cytoplasm. The catalysed reaction is Release of an N-terminal pyroglutamyl group from a polypeptide, the second amino acid generally not being Pro.. Functionally, removes 5-oxoproline from various penultimate amino acid residues except L-proline. This Staphylococcus saprophyticus subsp. saprophyticus (strain ATCC 15305 / DSM 20229 / NCIMB 8711 / NCTC 7292 / S-41) protein is Pyrrolidone-carboxylate peptidase.